A 317-amino-acid polypeptide reads, in one-letter code: Porphobilinogen deaminase (317 aa).

Cys245 is modified (S-(dipyrrolylmethanemethyl)cysteine).

This sequence belongs to the HMBS family. Monomer. It depends on dipyrromethane as a cofactor.

The catalysed reaction is 4 porphobilinogen + H2O = hydroxymethylbilane + 4 NH4(+). Its pathway is porphyrin-containing compound metabolism; protoporphyrin-IX biosynthesis; coproporphyrinogen-III from 5-aminolevulinate: step 2/4. The protein operates within porphyrin-containing compound metabolism; chlorophyll biosynthesis. Functionally, tetrapolymerization of the monopyrrole PBG into the hydroxymethylbilane pre-uroporphyrinogen in several discrete steps. The chain is Porphobilinogen deaminase from Parasynechococcus marenigrum (strain WH8102).